A 70-amino-acid chain; its full sequence is UPF0270 protein VIBHAR_00073 (70 aa).

The protein belongs to the UPF0270 family.

This is UPF0270 protein VIBHAR_00073 from Vibrio campbellii (strain ATCC BAA-1116).